Here is a 509-residue protein sequence, read N- to C-terminus: Maturase K (509 aa).

This sequence belongs to the intron maturase 2 family. MatK subfamily.

It localises to the plastid. Its subcellular location is the chloroplast. Its function is as follows. Usually encoded in the trnK tRNA gene intron. Probably assists in splicing its own and other chloroplast group II introns. In Otacanthus azureus (Brazilian snapdragon), this protein is Maturase K.